A 508-amino-acid chain; its full sequence is Photosystem II CP47 reaction center protein (508 aa).

6 consecutive transmembrane segments (helical) span residues Ser-21 to Ser-36, Ile-101 to Trp-115, Gly-140 to Phe-156, Ile-203 to Ser-218, Val-237 to Val-252, and Ser-457 to Arg-472.

The protein belongs to the PsbB/PsbC family. PsbB subfamily. PSII is composed of 1 copy each of membrane proteins PsbA, PsbB, PsbC, PsbD, PsbE, PsbF, PsbH, PsbI, PsbJ, PsbK, PsbL, PsbM, PsbT, PsbX, PsbY, PsbZ, Psb30/Ycf12, at least 3 peripheral proteins of the oxygen-evolving complex and a large number of cofactors. It forms dimeric complexes. Binds multiple chlorophylls. PSII binds additional chlorophylls, carotenoids and specific lipids. serves as cofactor.

The protein resides in the plastid. The protein localises to the chloroplast thylakoid membrane. Its function is as follows. One of the components of the core complex of photosystem II (PSII). It binds chlorophyll and helps catalyze the primary light-induced photochemical processes of PSII. PSII is a light-driven water:plastoquinone oxidoreductase, using light energy to abstract electrons from H(2)O, generating O(2) and a proton gradient subsequently used for ATP formation. In Eucalyptus globulus subsp. globulus (Tasmanian blue gum), this protein is Photosystem II CP47 reaction center protein.